Consider the following 739-residue polypeptide: Pre-mRNA-splicing factor ATP-dependent RNA helicase ddx-15 (739 aa).

Over residues 1–19 (MSSRHRLDLDGSGRGDRRR) the composition is skewed to basic and acidic residues. The disordered stretch occupies residues 1–49 (MSSRHRLDLDGSGRGDRRRSPNRRSRSRSRSPHRRSSPDRKRQIGAVGN). The segment covering 20–35 (SPNRRSRSRSRSPHRR) has biased composition (basic residues). The Helicase ATP-binding domain occupies 86 to 257 (MELLRNNQCI…FEDCPLLSVP (172 aa)). 99-106 (GETGSGKT) serves as a coordination point for ATP. The short motif at 204-207 (DEAH) is the DEAH box element. The Helicase C-terminal domain maps to 282-462 (TVIQIHMVEE…SVVLQLKKLG (181 aa)).

This sequence belongs to the DEAD box helicase family. DEAH subfamily. DDX15/PRP43 sub-subfamily.

It localises to the nucleus. It carries out the reaction ATP + H2O = ADP + phosphate + H(+). Functionally, pre-mRNA processing factor involved in disassembly of spliceosomes after the release of mature mRNA. This chain is Pre-mRNA-splicing factor ATP-dependent RNA helicase ddx-15, found in Caenorhabditis elegans.